Consider the following 251-residue polypeptide: uncharacterized protein (251 aa).

A run of 7 helical transmembrane segments spans residues 48-68 (WMVGGVTILTFMALLYLVELI), 88-108 (VLWGISFAPVLHANWQHLVAN), 110-130 (IPLLVLGFLIALAGLSRFIWV), 132-152 (AMVWIFGGSATWLIGNMGSSF), 158-178 (IGVSGLIFGWLAFLLVFGLFV), 184-204 (IIGCMVLFAYGGVLLGVMPVL), and 209-229 (GVSWQGHLCGAISGVVAAYLL).

To M.tuberculosis Rv1337.

It localises to the cell membrane. This is an uncharacterized protein from Mycobacterium leprae (strain TN).